The following is a 538-amino-acid chain: tRNA-2-methylthio-N(6)-dimethylallyladenosine synthase (538 aa).

Positions 1–23 (MNEEQRLGRNGNTDAVSTKEAGS) are disordered. Residues 95–213 (KKFLVRTYGC…LPHLLRNALF (119 aa)) form the MTTase N-terminal domain. The [4Fe-4S] cluster site is built by cysteine 104, cysteine 140, cysteine 174, cysteine 250, cysteine 254, and cysteine 257. Residues 236–466 (REGKTQAWVN…NALVNDISAQ (231 aa)) enclose the Radical SAM core domain. A TRAM domain is found at 469–532 (LEYQDKVVEV…TWSLNGEMVE (64 aa)).

The protein belongs to the methylthiotransferase family. MiaB subfamily. Monomer. [4Fe-4S] cluster serves as cofactor.

The protein localises to the cytoplasm. The catalysed reaction is N(6)-dimethylallyladenosine(37) in tRNA + (sulfur carrier)-SH + AH2 + 2 S-adenosyl-L-methionine = 2-methylsulfanyl-N(6)-dimethylallyladenosine(37) in tRNA + (sulfur carrier)-H + 5'-deoxyadenosine + L-methionine + A + S-adenosyl-L-homocysteine + 2 H(+). Catalyzes the methylthiolation of N6-(dimethylallyl)adenosine (i(6)A), leading to the formation of 2-methylthio-N6-(dimethylallyl)adenosine (ms(2)i(6)A) at position 37 in tRNAs that read codons beginning with uridine. The protein is tRNA-2-methylthio-N(6)-dimethylallyladenosine synthase of Halalkalibacterium halodurans (strain ATCC BAA-125 / DSM 18197 / FERM 7344 / JCM 9153 / C-125) (Bacillus halodurans).